The sequence spans 454 residues: Histidine--tRNA ligase (454 aa).

It belongs to the class-II aminoacyl-tRNA synthetase family. As to quaternary structure, homodimer.

The protein resides in the cytoplasm. The enzyme catalyses tRNA(His) + L-histidine + ATP = L-histidyl-tRNA(His) + AMP + diphosphate + H(+). The chain is Histidine--tRNA ligase from Bacteroides fragilis (strain ATCC 25285 / DSM 2151 / CCUG 4856 / JCM 11019 / LMG 10263 / NCTC 9343 / Onslow / VPI 2553 / EN-2).